The primary structure comprises 79 residues: Peptide Im-5 (79 aa).

An N-terminal signal peptide occupies residues 1-23 (MKYRKQLLVLFFAYFLVVNESEA). The propeptide occupies 49-79 (RALMKRDLQDRMDPYQRNLKLDRYLKQLALD).

This sequence belongs to the non-disulfide-bridged peptide (NDBP) superfamily. Medium-length antimicrobial peptide (group 3) family. As to expression, expressed by the venom gland.

The protein localises to the secreted. It localises to the target cell membrane. In terms of biological role, antimicrobial peptide that may act by disrupting the integrity of the bacterial cell membrane. Has antibacterial activity against Gram-negative bacterium E.coli NBRC 3972 (MIC=10 uM) and against Gram-positive bacteria S.aureus NBRC 13276 (MIC=2.5-5 uM) and B.subtilis NBRC 3009 (MIC=0.5-1 uM). Also shows potent activity against antibiotic-sensitive and -resistant Acinetobacter baumannii (MIC=1.8-3.6 uM). Shows cytolytic activity against human and sheep erythrocytes. Toxic to cricket A.domestica. The protein is Peptide Im-5 of Isometrus maculatus (Lesser brown scorpion).